We begin with the raw amino-acid sequence, 108 residues long: MIITTTDVIQGAVIESYLGIVTAEVVYGSNFLRDFLAGIRDIIGGRTASYERLFEQGQRKALEELEQRAQRLGANAVIGIEIDTGTINLDQSGVLLLITATGTAVKMR.

It belongs to the UPF0145 family.

In Nostoc punctiforme (strain ATCC 29133 / PCC 73102), this protein is UPF0145 protein Npun_F4817.